The following is a 431-amino-acid chain: Trigger factor (431 aa).

A PPIase FKBP-type domain is found at 165–250 (TDTAVFDFEG…LHQIKTKKIP (86 aa)).

The protein belongs to the FKBP-type PPIase family. Tig subfamily.

It is found in the cytoplasm. The enzyme catalyses [protein]-peptidylproline (omega=180) = [protein]-peptidylproline (omega=0). Functionally, involved in protein export. Acts as a chaperone by maintaining the newly synthesized protein in an open conformation. Functions as a peptidyl-prolyl cis-trans isomerase. In Aster yellows witches'-broom phytoplasma (strain AYWB), this protein is Trigger factor.